The sequence spans 113 residues: Large ribosomal subunit protein eL31B (113 aa).

It belongs to the eukaryotic ribosomal protein eL31 family. As to quaternary structure, component of the large ribosomal subunit (LSU). Mature yeast ribosomes consist of a small (40S) and a large (60S) subunit. The 40S small subunit contains 1 molecule of ribosomal RNA (18S rRNA) and 33 different proteins (encoded by 57 genes). The large 60S subunit contains 3 rRNA molecules (25S, 5.8S and 5S rRNA) and 46 different proteins (encoded by 81 genes).

It is found in the cytoplasm. In terms of biological role, component of the ribosome, a large ribonucleoprotein complex responsible for the synthesis of proteins in the cell. The small ribosomal subunit (SSU) binds messenger RNAs (mRNAs) and translates the encoded message by selecting cognate aminoacyl-transfer RNA (tRNA) molecules. The large subunit (LSU) contains the ribosomal catalytic site termed the peptidyl transferase center (PTC), which catalyzes the formation of peptide bonds, thereby polymerizing the amino acids delivered by tRNAs into a polypeptide chain. The nascent polypeptides leave the ribosome through a tunnel in the LSU and interact with protein factors that function in enzymatic processing, targeting, and the membrane insertion of nascent chains at the exit of the ribosomal tunnel. The polypeptide is Large ribosomal subunit protein eL31B (Saccharomyces cerevisiae (strain ATCC 204508 / S288c) (Baker's yeast)).